The following is a 96-amino-acid chain: Aspartyl/glutamyl-tRNA(Asn/Gln) amidotransferase subunit C (96 aa).

This sequence belongs to the GatC family. Heterotrimer of A, B and C subunits.

The catalysed reaction is L-glutamyl-tRNA(Gln) + L-glutamine + ATP + H2O = L-glutaminyl-tRNA(Gln) + L-glutamate + ADP + phosphate + H(+). The enzyme catalyses L-aspartyl-tRNA(Asn) + L-glutamine + ATP + H2O = L-asparaginyl-tRNA(Asn) + L-glutamate + ADP + phosphate + 2 H(+). In terms of biological role, allows the formation of correctly charged Asn-tRNA(Asn) or Gln-tRNA(Gln) through the transamidation of misacylated Asp-tRNA(Asn) or Glu-tRNA(Gln) in organisms which lack either or both of asparaginyl-tRNA or glutaminyl-tRNA synthetases. The reaction takes place in the presence of glutamine and ATP through an activated phospho-Asp-tRNA(Asn) or phospho-Glu-tRNA(Gln). The protein is Aspartyl/glutamyl-tRNA(Asn/Gln) amidotransferase subunit C of Chloroflexus aurantiacus (strain ATCC 29366 / DSM 635 / J-10-fl).